The sequence spans 445 residues: Tubulin beta-2 chain (445 aa).

Positions 1-4 (MREI) match the MREI motif motif. Residues Gln11, Glu69, Ser138, Gly142, Thr143, Gly144, Asn204, and Asn226 each coordinate GTP. Glu69 contacts Mg(2+). The disordered stretch occupies residues 424–445 (QYQDATADEQGEFEEEGEEDEA). Residues 429–445 (TADEQGEFEEEGEEDEA) are compositionally biased toward acidic residues. Glu438 carries the post-translational modification 5-glutamyl polyglutamate.

The protein belongs to the tubulin family. In terms of assembly, dimer of alpha and beta chains. A typical microtubule is a hollow water-filled tube with an outer diameter of 25 nm and an inner diameter of 15 nM. Alpha-beta heterodimers associate head-to-tail to form protofilaments running lengthwise along the microtubule wall with the beta-tubulin subunit facing the microtubule plus end conferring a structural polarity. Microtubules usually have 13 protofilaments but different protofilament numbers can be found in some organisms and specialized cells. Requires Mg(2+) as cofactor. In terms of processing, some glutamate residues at the C-terminus are polyglycylated, resulting in polyglycine chains on the gamma-carboxyl group. Glycylation is mainly limited to tubulin incorporated into axonemes (cilia and flagella) whereas glutamylation is prevalent in neuronal cells, centrioles, axonemes, and the mitotic spindle. Both modifications can coexist on the same protein on adjacent residues, and lowering polyglycylation levels increases polyglutamylation, and reciprocally. The precise function of polyglycylation is still unclear. Post-translationally, some glutamate residues at the C-terminus are polyglutamylated, resulting in polyglutamate chains on the gamma-carboxyl group. Polyglutamylation plays a key role in microtubule severing by spastin (SPAST). SPAST preferentially recognizes and acts on microtubules decorated with short polyglutamate tails: severing activity by SPAST increases as the number of glutamates per tubulin rises from one to eight, but decreases beyond this glutamylation threshold. As to expression, highly expressed in neuronal cells.

It localises to the cytoplasm. The protein localises to the cytoskeleton. Functionally, tubulin is the major constituent of microtubules, a cylinder consisting of laterally associated linear protofilaments composed of alpha- and beta-tubulin heterodimers. Microtubules grow by the addition of GTP-tubulin dimers to the microtubule end, where a stabilizing cap forms. Below the cap, tubulin dimers are in GDP-bound state, owing to GTPase activity of alpha-tubulin. The sequence is that of Tubulin beta-2 chain from Gallus gallus (Chicken).